Reading from the N-terminus, the 259-residue chain is Ribosomal RNA small subunit methyltransferase J (259 aa).

S-adenosyl-L-methionine contacts are provided by residues 101–102 (RD), 117–118 (ER), 153–154 (SS), and D176.

The protein belongs to the methyltransferase superfamily. RsmJ family.

It localises to the cytoplasm. The catalysed reaction is guanosine(1516) in 16S rRNA + S-adenosyl-L-methionine = N(2)-methylguanosine(1516) in 16S rRNA + S-adenosyl-L-homocysteine + H(+). In terms of biological role, specifically methylates the guanosine in position 1516 of 16S rRNA. The chain is Ribosomal RNA small subunit methyltransferase J from Aliivibrio fischeri (strain ATCC 700601 / ES114) (Vibrio fischeri).